Consider the following 211-residue polypeptide: MCLESKPGNSKTLSLINQGYQILAEYQLVEQEQLRGIYAIPSYSSCLLWFGVIFIHSGCYAESVFRFSILLPDQFPNERTLPTVIFQQDIFHPHICPISHSLDLRCLLKDWVKDEHHIWHILKYIQAIFADPEGSIIGNGVARPLTELNNFKAFHLLSQNRIDYVLRVRNSILWSCKHMFDKPPIKDPHYIVLERYLPHKHLAVMKSSHSQ.

A UBC core domain is found at 17–177; the sequence is NQGYQILAEY…VRNSILWSCK (161 aa).

The protein belongs to the ubiquitin-conjugating enzyme family. FTS subfamily.

This is Protein crossbronx-like from Drosophila grimshawi (Hawaiian fruit fly).